A 778-amino-acid chain; its full sequence is pH-response regulator protein palH/prr-4 (778 aa).

The Extracellular portion of the chain corresponds to 1–108; sequence MEPRQLFSDP…DPFYASTFPQ (108 aa). The chain crosses the membrane as a helical span at residues 109–129; it reads CYALAATTIIAYTLVIMLFIT. The Periplasmic segment spans residues 130-160; sequence PRSFLDGGVVVLGRKGFTNGGGGTSIGGRPW. The chain crosses the membrane as a helical span at residues 161-181; sequence LQKVAALSVAISLTIANAATF. At 182–201 the chain is on the extracellular side; that stretch reads RAAEQQYSWGVQNAKQLQED. Residues 202–222 form a helical membrane-spanning segment; the sequence is VLGGAELKIIRIISDTFLWLA. Residues 223–237 lie on the Periplasmic side of the membrane; the sequence is QAQTLIRLFPRQREK. Residues 238–258 traverse the membrane as a helical segment; sequence VIIKWTAFALITLDVIFQSLN. Over 259–275 the chain is Extracellular; sequence SFKYGGSDLTRPKFTEA. The helical transmembrane segment at 276–296 threads the bilayer; that stretch reads VPALSYLFALALGVLYAAWVL. Residues 297-314 are Periplasmic-facing; it reads YYSIMKKRYAFYHPLMKN. The chain crosses the membrane as a helical span at residues 315 to 335; sequence MILVAVLSVVSILVPVVFFIL. Residues 336 to 341 lie on the Extracellular side of the membrane; that stretch reads DISKPD. A helical transmembrane segment spans residues 342–362; it reads FAGWGDYVRWVGAAAASVIVW. The Periplasmic portion of the chain corresponds to 363–778; it reads EWVERIEALE…RSDSSTTPSP (416 aa). Disordered regions lie at residues 394–499, 514–605, and 660–778; these read ASQS…DTTS, ELTS…DENS, and ELNH…TPSP. Residues 446–456 show a composition bias toward basic and acidic residues; the sequence is HRTEPSSRNEP. Residues 457-466 show a composition bias toward polar residues; the sequence is NEGSSPVAET. Basic and acidic residues-rich tracts occupy residues 588-605 and 661-675; these read FVTR…DENS and LNHS…EESR. Residues 720 to 732 are compositionally biased toward polar residues; it reads PIVTQGSFTNNRY. Residues 749–759 show a composition bias toward low complexity; the sequence is ARAPSQPQSPS. The segment covering 769–778 has biased composition (polar residues); the sequence is RSDSSTTPSP.

Belongs to the palH/RIM21 family.

Its subcellular location is the cell membrane. In terms of biological role, required for the proteolytic cleavage of the transcription factor pacc-1 in response to alkaline ambient pH. This is pH-response regulator protein palH/prr-4 (prr-4) from Neurospora crassa (strain ATCC 24698 / 74-OR23-1A / CBS 708.71 / DSM 1257 / FGSC 987).